The chain runs to 262 residues: Spindlin-W (262 aa).

Residues 1-49 (MKTPFGKSPAQRSRADAGHTRVSASMMKKRTSHKKHRNNVGPSKPISQP) are disordered. The span at 27 to 38 (MKKRTSHKKHRN) shows a compositional bias: basic residues.

It belongs to the SPIN/STSY family. Expressed predominantly in ovarian granulosa and thecal cell.

The protein resides in the nucleus. Its function is as follows. May play a role in mitosis. In Gallus gallus (Chicken), this protein is Spindlin-W (SPINW).